The sequence spans 289 residues: SNF1-related protein kinase regulatory subunit beta-2 (289 aa).

Basic and acidic residues predominate over residues 1-10; it reads MGNVNAREEA. The segment at 1-59 is disordered; that stretch reads MGNVNAREEANSNNASAVEDEDAEICSREAMSAASDGNHVAPPELMGQSPPHSPRATQS. A lipid anchor (N-myristoyl glycine) is attached at Gly2. Residues 103–180 form a kinase-interacting sequence (KIS) region; it reads PTMITWCHGG…AGNTFNILDL (78 aa). Positions 217–289 are association with SNF1 complex (ASC); it reads EPPVVPPHLQ…TVVLYKSLQR (73 aa).

It belongs to the 5'-AMP-activated protein kinase beta subunit family. As to quaternary structure, subunit of a probable heterotrimeric complex consisting of an alpha catalytic (KIN10 or KIN11) subunit, and a beta (KINB) and a gamma (KING or SNF4) non-catalytic regulatory subunits. Interacts with SNF4. Interacts with FLZ1, FLZ2, FLZ8, FLZ9, FLZ10, FLZ12, FLZ13 and FLZ14. Sumoylated. As to expression, expressed in leaves, stems, roots, flower buds and flowers. Not detectable in siliques.

It localises to the cell membrane. Functionally, regulatory subunit of the probable trimeric SNF1-related protein kinase (SnRK) complex, which may play a role in a signal transduction cascade regulating gene expression and carbohydrate metabolism in higher plants. The SnRK complex may also be involved in the regulation of fatty acid synthesis by phosphorylation of acetyl-CoA carboxylase and in assimilation of nitrogen by phosphorylating nitrate reductase. The protein is SNF1-related protein kinase regulatory subunit beta-2 (KINB2) of Arabidopsis thaliana (Mouse-ear cress).